We begin with the raw amino-acid sequence, 548 residues long: uncharacterized protein (548 aa).

Residues 8-200 (KLFADMIIQG…LLCVYEGFLK (193 aa)) enclose the DhaL domain.

This is an uncharacterized protein from Staphylococcus aureus (strain MRSA252).